Consider the following 171-residue polypeptide: MAELDIQISIENIGWPEEETLLAFCGRVLGAAAVYLRDSEKQPFPTMPPEVSLVFTDDASIQDINAEWRGKDKATNVLSFPAFPVQPGKMPGPMLGDIIIARETVEREAHELEKSFDDHLTHLLVHGFLHLLGYDHMNSAEAEIMEGLETRILAQLGLSDPYEGQDLKMEP.

The Zn(2+) site is built by His126, His130, and His136.

It belongs to the endoribonuclease YbeY family. The cofactor is Zn(2+).

The protein resides in the cytoplasm. In terms of biological role, single strand-specific metallo-endoribonuclease involved in late-stage 70S ribosome quality control and in maturation of the 3' terminus of the 16S rRNA. This chain is Endoribonuclease YbeY, found in Rhizobium etli (strain CIAT 652).